The sequence spans 360 residues: Peptide chain release factor 1 (360 aa).

Position 235 is an N5-methylglutamine (Q235). Residues A291–R308 show a composition bias toward basic and acidic residues. A disordered region spans residues A291–F312.

This sequence belongs to the prokaryotic/mitochondrial release factor family. Methylated by PrmC. Methylation increases the termination efficiency of RF1.

The protein localises to the cytoplasm. Its function is as follows. Peptide chain release factor 1 directs the termination of translation in response to the peptide chain termination codons UAG and UAA. The polypeptide is Peptide chain release factor 1 (Yersinia pseudotuberculosis serotype O:1b (strain IP 31758)).